The chain runs to 428 residues: Putative zinc metalloprotease SAS1196 (428 aa).

His21 serves as a coordination point for Zn(2+). Glu22 is an active-site residue. His25 is a binding site for Zn(2+). 4 consecutive transmembrane segments (helical) span residues 172 to 194 (FLTL…IGLA), 309 to 331 (GSTL…GFSF), 352 to 374 (IISL…LIPI), and 401 to 420 (TTII…LVTW). Residues 186–269 (ALVLFIGLAY…TKSVELTPKK (84 aa)) enclose the PDZ domain.

Belongs to the peptidase M50B family. Requires Zn(2+) as cofactor.

Its subcellular location is the cell membrane. In Staphylococcus aureus (strain MSSA476), this protein is Putative zinc metalloprotease SAS1196.